We begin with the raw amino-acid sequence, 130 residues long: Small ribosomal subunit protein uS9 (130 aa).

The protein belongs to the universal ribosomal protein uS9 family.

In Pectobacterium carotovorum subsp. carotovorum (strain PC1), this protein is Small ribosomal subunit protein uS9.